The chain runs to 224 residues: Putative adhesin A1C_06425 (224 aa).

The N-terminal stretch at 1-22 (MKKLLLIATTSATILSSSISFA) is a signal peptide.

The polypeptide is Putative adhesin A1C_06425 (Rickettsia akari (strain Hartford)).